Reading from the N-terminus, the 314-residue chain is Curved DNA-binding protein (314 aa).

Residues 5–69 enclose the J domain; it reads DYYKILDVEP…EKRAEYDELR (65 aa). Residues 73 to 92 are disordered; sequence RQGRPFQTPPGWQSRAGAGA.

It localises to the cytoplasm. Its subcellular location is the nucleoid. Functionally, DNA-binding protein that preferentially recognizes a curved DNA sequence. It is probably a functional analog of DnaJ; displays overlapping activities with DnaJ, but functions under different conditions, probably acting as a molecular chaperone in an adaptive response to environmental stresses other than heat shock. Lacks autonomous chaperone activity; binds native substrates and targets them for recognition by DnaK. Its activity is inhibited by the binding of CbpM. The chain is Curved DNA-binding protein from Pseudomonas syringae pv. tomato (strain ATCC BAA-871 / DC3000).